Consider the following 270-residue polypeptide: UPF0354 protein BCE_4835 (270 aa).

This sequence belongs to the UPF0354 family.

The protein is UPF0354 protein BCE_4835 of Bacillus cereus (strain ATCC 10987 / NRS 248).